The chain runs to 238 residues: HTH-type transcriptional regulator TreR (238 aa).

Residues 1 to 71 (MKVNKFITIY…RGKGSVVLNR (71 aa)) enclose the HTH gntR-type domain. A DNA-binding region (H-T-H motif) is located at residues 31-50 (EHELTAQYGTSRETVRKALH).

As to quaternary structure, dimer of dimers.

Its function is as follows. Repressor for the trePA operon. It is able to bind trehalose-6-phosphate. The sequence is that of HTH-type transcriptional regulator TreR (treR) from Bacillus subtilis (strain 168).